Reading from the N-terminus, the 339-residue chain is Beta-ketoacyl-[acyl-carrier-protein] synthase III (339 aa).

Residues C119 and H262 contribute to the active site. Residues 263–267 (QANQR) form an ACP-binding region. Residue N292 is part of the active site.

This sequence belongs to the thiolase-like superfamily. FabH family. As to quaternary structure, homodimer.

The protein resides in the cytoplasm. The enzyme catalyses malonyl-[ACP] + acetyl-CoA + H(+) = 3-oxobutanoyl-[ACP] + CO2 + CoA. Its pathway is lipid metabolism; fatty acid biosynthesis. Functionally, catalyzes the condensation reaction of fatty acid synthesis by the addition to an acyl acceptor of two carbons from malonyl-ACP. Catalyzes the first condensation reaction which initiates fatty acid synthesis and may therefore play a role in governing the total rate of fatty acid production. Possesses both acetoacetyl-ACP synthase and acetyl transacylase activities. Its substrate specificity determines the biosynthesis of branched-chain and/or straight-chain of fatty acids. This chain is Beta-ketoacyl-[acyl-carrier-protein] synthase III, found in Prochlorococcus marinus (strain MIT 9313).